Reading from the N-terminus, the 382-residue chain is Innexin-8 (382 aa).

Helical transmembrane passes span 29 to 49, 103 to 123, 187 to 207, and 270 to 290; these read LITAFLFITAAILTSAKTYVG, QWSSMYLAVAGIAFMIPKFLW, VIKILYLVNAIAQFVIIAIFL, and IFLFFWFWLVFLVFSTLIAHF.

Belongs to the pannexin family.

The protein localises to the cell membrane. It is found in the cell junction. It localises to the gap junction. In terms of biological role, structural component of the gap junctions. This Caenorhabditis elegans protein is Innexin-8 (inx-8).